Consider the following 206-residue polypeptide: Large ribosomal subunit protein uL3 (206 aa).

The interval 127 to 151 (SGGPSSHGSKFHRHLGGTGQATTPA) is disordered.

Belongs to the universal ribosomal protein uL3 family. In terms of assembly, part of the 50S ribosomal subunit. Forms a cluster with proteins L14 and L19.

One of the primary rRNA binding proteins, it binds directly near the 3'-end of the 23S rRNA, where it nucleates assembly of the 50S subunit. This Borrelia garinii subsp. bavariensis (strain ATCC BAA-2496 / DSM 23469 / PBi) (Borreliella bavariensis) protein is Large ribosomal subunit protein uL3.